We begin with the raw amino-acid sequence, 186 residues long: ATP synthase subunit delta (186 aa).

The protein belongs to the ATPase delta chain family. In terms of assembly, F-type ATPases have 2 components, F(1) - the catalytic core - and F(0) - the membrane proton channel. F(1) has five subunits: alpha(3), beta(3), gamma(1), delta(1), epsilon(1). F(0) has three main subunits: a(1), b(2) and c(10-14). The alpha and beta chains form an alternating ring which encloses part of the gamma chain. F(1) is attached to F(0) by a central stalk formed by the gamma and epsilon chains, while a peripheral stalk is formed by the delta and b chains.

It is found in the cell inner membrane. Functionally, f(1)F(0) ATP synthase produces ATP from ADP in the presence of a proton or sodium gradient. F-type ATPases consist of two structural domains, F(1) containing the extramembraneous catalytic core and F(0) containing the membrane proton channel, linked together by a central stalk and a peripheral stalk. During catalysis, ATP synthesis in the catalytic domain of F(1) is coupled via a rotary mechanism of the central stalk subunits to proton translocation. In terms of biological role, this protein is part of the stalk that links CF(0) to CF(1). It either transmits conformational changes from CF(0) to CF(1) or is implicated in proton conduction. This is ATP synthase subunit delta from Leptospira interrogans serogroup Icterohaemorrhagiae serovar copenhageni (strain Fiocruz L1-130).